Consider the following 253-residue polypeptide: Vitamin B12 import ATP-binding protein BtuD (253 aa).

Residues 1 to 236 enclose the ABC transporter domain; the sequence is MTNQLMALNQ…NTLSRVFAAD (236 aa). 34-41 provides a ligand contact to ATP; the sequence is GPNGSGKS.

Belongs to the ABC transporter superfamily. Vitamin B12 importer (TC 3.A.1.13.1) family. In terms of assembly, the complex is composed of two ATP-binding proteins (BtuD), two transmembrane proteins (BtuC) and a solute-binding protein (BtuF).

Its subcellular location is the cell inner membrane. It catalyses the reaction an R-cob(III)alamin(out) + ATP + H2O = an R-cob(III)alamin(in) + ADP + phosphate + H(+). Functionally, part of the ABC transporter complex BtuCDF involved in vitamin B12 import. Responsible for energy coupling to the transport system. In Photorhabdus laumondii subsp. laumondii (strain DSM 15139 / CIP 105565 / TT01) (Photorhabdus luminescens subsp. laumondii), this protein is Vitamin B12 import ATP-binding protein BtuD.